The primary structure comprises 221 residues: Octanoyltransferase (221 aa).

One can recognise a BPL/LPL catalytic domain in the interval 14-202 (GVRPDTLWFL…MLGARNAPHP (189 aa)). Substrate-binding positions include 54–61 (RGGLLTYH), 128–130 (SIG), and 141–143 (GFA). Cys159 serves as the catalytic Acyl-thioester intermediate. Residues 197–221 (RNAPHPPAPNLSSGDLGTGTRAGRT) are disordered.

It belongs to the LipB family.

Its subcellular location is the cytoplasm. It catalyses the reaction octanoyl-[ACP] + L-lysyl-[protein] = N(6)-octanoyl-L-lysyl-[protein] + holo-[ACP] + H(+). It functions in the pathway protein modification; protein lipoylation via endogenous pathway; protein N(6)-(lipoyl)lysine from octanoyl-[acyl-carrier-protein]: step 1/2. In terms of biological role, catalyzes the transfer of endogenously produced octanoic acid from octanoyl-acyl-carrier-protein onto the lipoyl domains of lipoate-dependent enzymes. Lipoyl-ACP can also act as a substrate although octanoyl-ACP is likely to be the physiological substrate. The polypeptide is Octanoyltransferase (Frankia casuarinae (strain DSM 45818 / CECT 9043 / HFP020203 / CcI3)).